Reading from the N-terminus, the 68-residue chain is DNA-directed RNA polymerase subunit omega (68 aa).

Belongs to the RNA polymerase subunit omega family. The RNAP catalytic core consists of 2 alpha, 1 beta, 1 beta' and 1 omega subunit. When a sigma factor is associated with the core the holoenzyme is formed, which can initiate transcription.

The catalysed reaction is RNA(n) + a ribonucleoside 5'-triphosphate = RNA(n+1) + diphosphate. Its function is as follows. Promotes RNA polymerase assembly. Latches the N- and C-terminal regions of the beta' subunit thereby facilitating its interaction with the beta and alpha subunits. This Syntrophotalea carbinolica (strain DSM 2380 / NBRC 103641 / GraBd1) (Pelobacter carbinolicus) protein is DNA-directed RNA polymerase subunit omega.